The following is a 678-amino-acid chain: Protein distal antenna (678 aa).

An HTH psq-type domain is found at 7–58 (TKGKRPLRSLTPRDKIHAIQRIHDGESKASVARDIGVPESTLRGWCKNEDKL). A DNA-binding region (H-T-H motif) is located at residues 34-54 (KASVARDIGVPESTLRGWCKN). 5 disordered regions span residues 232-310 (GAGN…GGPM), 344-381 (GVTSPPIRSSTPQHMSQLAQTPPIPSAPLTPSSTPSGS), 445-528 (KETE…TSEC), 541-592 (GMEA…DEEE), and 645-678 (NETPMIEKSALPEDSEEHAAEEEGSGRGKSRRRK). Composition is skewed to polar residues over residues 241–254 (PSGQTPLQVQSPRS) and 349–363 (PIRSSTPQHMSQLAQ). Phosphoserine occurs at positions 251 and 254. Residues 372-381 (LTPSSTPSGS) show a composition bias toward low complexity. Residues 449-461 (TPSVRSLSSNEQN) show a composition bias toward polar residues. Acidic residues predominate over residues 462–478 (PEADEATETDLDGEVEP). Polar residues predominate over residues 495 to 508 (TPSQSPIAHSSGSR). A compositionally biased stretch (low complexity) spans 570–586 (NNNDVSASNNNNNNNSN). The segment covering 657-667 (EDSEEHAAEEE) has biased composition (acidic residues).

As to quaternary structure, homomers. Interacts with itself, danr, ey and dac to form a complex (or complexes) containing the RD factors. In terms of tissue distribution, coexpressed with danr in the presumptive distal antenna, but not in the leg imaginal disk. Both proteins are also expressed in the brain and the eye region of the eye-antenna disk. First detected in early L3 eye disks in cells surrounding the newly initiated MF. Levels are uniform and high anterior to the furrow, lower levels within and posterior to the furrow. Limited expression is seen in small groups of cells in leg and wing. These appear in the location of prominent sense organ progenitors at relatively late stages of disk development.

It is found in the nucleus. Its function is as follows. Probable transcription factor with a role in the retinal determination (RD) network. Regulates ato expression and is required for normal R8 induction and differentiation. Danr appears to repress Dan expression, but Dan is required for Danr expression anterior to the morphogenetic furrow (MF). Dan and Danr lie downstream of so and require dac function for highest levels of expression. Contributes to differentiation of antenna-specific characteristics; effector gene that acts downstream of homothorax (hth), Distal-less (Dll), cut (ct) and spineless (ss) genes to control differentiation of distal antennal structures. This is Protein distal antenna from Drosophila melanogaster (Fruit fly).